The sequence spans 280 residues: Fe-S cluster assembly protein DRE2 (280 aa).

An N-terminal SAM-like domain region spans residues 1–121 (MSNLLVFDNS…TTLLKKSGGG (121 aa)). A linker region spans residues 122–176 (PKKFAFKRASPATAAPSTNGTNPAATVNLNSVVTLSMDDDDLMDEDDLMEDDTNL). Positions 186, 198, 201, and 203 each coordinate [2Fe-2S] cluster. The interval 186–203 (CDPGPGKKRRKACKDCTC) is fe-S binding site A. The [4Fe-4S] cluster site is built by Cys-244, Cys-247, Cys-255, and Cys-258. Short sequence motifs (cx2C motif) lie at residues 244-247 (CGSC) and 255-258 (CDGC). The interval 244–258 (CGSCALGDAFRCDGC) is fe-S binding site B.

The protein belongs to the anamorsin family. As to quaternary structure, monomer. Interacts with TAH18. Interacts with MIA40. [2Fe-2S] cluster serves as cofactor. The cofactor is [4Fe-4S] cluster.

The protein resides in the cytoplasm. It is found in the mitochondrion intermembrane space. Its function is as follows. Component of the cytosolic iron-sulfur (Fe-S) protein assembly (CIA) machinery required for the maturation of extramitochondrial Fe-S proteins. Part of an electron transfer chain functioning in an early step of cytosolic Fe-S biogenesis, facilitating the de novo assembly of a [4Fe-4S] cluster on the scaffold complex CFD1-NBP35. Electrons are transferred to DRE2 from NADPH via the FAD- and FMN-containing protein TAH18. TAH18-DRE2 are also required for the assembly of the diferric tyrosyl radical cofactor of ribonucleotide reductase (RNR), probably by providing electrons for reduction during radical cofactor maturation in the catalytic small subunit RNR2. This chain is Fe-S cluster assembly protein DRE2, found in Yarrowia lipolytica (strain CLIB 122 / E 150) (Yeast).